A 391-amino-acid polypeptide reads, in one-letter code: Acetylgalactosaminyl-O-glycosyl-glycoprotein beta-1,3-N-acetylglucosaminyltransferase (391 aa).

Topologically, residues 1-11 (MALPSSRRFKS) are cytoplasmic. Residues 12 to 32 (PTTLAFFLVGVTLVVLNQWFL) form a helical; Signal-anchor for type II membrane protein membrane-spanning segment. The Lumenal segment spans residues 33-391 (QEHRQEKAKG…TAGEQNPDAH (359 aa)). N-linked (GlcNAc...) asparagine glycans are attached at residues Asn68 and Asn191.

This sequence belongs to the glycosyltransferase 31 family.

The protein resides in the golgi apparatus membrane. The enzyme catalyses a 3-O-[N-acetyl-alpha-D-galactosaminyl]-L-threonyl-[protein] + UDP-N-acetyl-alpha-D-glucosamine = a 3-O-[N-acetyl-beta-D-glucosaminyl-(1-&gt;3)-N-acetyl-alpha-D-galactosaminyl]-L-threonyl-[protein] + UDP + H(+). It carries out the reaction a 3-O-[N-acetyl-alpha-D-galactosaminyl]-L-seryl-[protein] + UDP-N-acetyl-alpha-D-glucosamine = 3-O-[N-acetyl-beta-D-glucosaminyl-(1-&gt;3)-N-acetyl-alpha-D-galactosaminyl]-L-seryl-[protein] + UDP + H(+). It participates in protein modification; protein glycosylation. In terms of biological role, beta-1,3-N-acetylglucosaminyltransferase that synthesizes the core 3 structure of the O-glycan, an important precursor in the biosynthesis of mucin-type glycoproteins. Plays an important role in the synthesis of mucin-type O-glycans in digestive organs. In Mus musculus (Mouse), this protein is Acetylgalactosaminyl-O-glycosyl-glycoprotein beta-1,3-N-acetylglucosaminyltransferase (B3gnt6).